A 501-amino-acid polypeptide reads, in one-letter code: Ribose import ATP-binding protein RbsA (501 aa).

2 consecutive ABC transporter domains span residues L8 to T245 and V255 to N500. Residue G40–S47 participates in ATP binding.

Belongs to the ABC transporter superfamily. Ribose importer (TC 3.A.1.2.1) family. In terms of assembly, the complex is composed of an ATP-binding protein (RbsA), two transmembrane proteins (RbsC) and a solute-binding protein (RbsB).

It is found in the cell membrane. The enzyme catalyses D-ribose(out) + ATP + H2O = D-ribose(in) + ADP + phosphate + H(+). Part of the ABC transporter complex RbsABC involved in ribose import. Responsible for energy coupling to the transport system. The protein is Ribose import ATP-binding protein RbsA of Clostridium perfringens (strain SM101 / Type A).